We begin with the raw amino-acid sequence, 198 residues long: 3-isopropylmalate dehydratase small subunit (198 aa).

Belongs to the LeuD family. LeuD type 1 subfamily. In terms of assembly, heterodimer of LeuC and LeuD.

The catalysed reaction is (2R,3S)-3-isopropylmalate = (2S)-2-isopropylmalate. It participates in amino-acid biosynthesis; L-leucine biosynthesis; L-leucine from 3-methyl-2-oxobutanoate: step 2/4. In terms of biological role, catalyzes the isomerization between 2-isopropylmalate and 3-isopropylmalate, via the formation of 2-isopropylmaleate. The protein is 3-isopropylmalate dehydratase small subunit of Colwellia psychrerythraea (strain 34H / ATCC BAA-681) (Vibrio psychroerythus).